A 127-amino-acid chain; its full sequence is Thioredoxin domain-containing protein 8 (127 aa).

In terms of domain architecture, Thioredoxin spans 2-127 (VKRIKNMSEL…QLEKKIQELM (126 aa)). A disulfide bridge connects residues C32 and C35.

This sequence belongs to the thioredoxin family. In terms of tissue distribution, testis-specific. Only expressed during spermiogenesis, prominently in the Golgi apparatus of pachytene spermatocytes and round and elongated spermatids, with a transient localization in the developing acrosome of round spermatids (at protein level).

The protein resides in the cytoplasm. It localises to the golgi apparatus. Functionally, may be required for post-translational modifications of proteins required for acrosomal biogenesis. May act by reducing disulfide bonds within the sperm. The polypeptide is Thioredoxin domain-containing protein 8 (Txndc8) (Mus musculus (Mouse)).